The following is a 146-amino-acid chain: Anti-sigma F factor (146 aa).

This sequence belongs to the anti-sigma-factor family.

It catalyses the reaction L-seryl-[protein] + ATP = O-phospho-L-seryl-[protein] + ADP + H(+). The enzyme catalyses L-threonyl-[protein] + ATP = O-phospho-L-threonyl-[protein] + ADP + H(+). Binds to sigma F and blocks its ability to form an RNA polymerase holoenzyme (E-sigma F). Phosphorylates SpoIIAA on a serine residue. This phosphorylation may enable SpoIIAA to act as an anti-anti-sigma factor that counteracts SpoIIAB and thus releases sigma F from inhibition. The polypeptide is Anti-sigma F factor (Geobacillus thermodenitrificans (strain NG80-2)).